The primary structure comprises 418 residues: tRNA(Met) cytidine acetate ligase (418 aa).

Glycine 95, asparagine 161, and arginine 186 together coordinate ATP.

Belongs to the TmcAL family.

It localises to the cytoplasm. The enzyme catalyses cytidine(34) in elongator tRNA(Met) + acetate + ATP = N(4)-acetylcytidine(34) in elongator tRNA(Met) + AMP + diphosphate. In terms of biological role, catalyzes the formation of N(4)-acetylcytidine (ac(4)C) at the wobble position of elongator tRNA(Met), using acetate and ATP as substrates. First activates an acetate ion to form acetyladenylate (Ac-AMP) and then transfers the acetyl group to tRNA to form ac(4)C34. In Thermotoga petrophila (strain ATCC BAA-488 / DSM 13995 / JCM 10881 / RKU-1), this protein is tRNA(Met) cytidine acetate ligase.